Consider the following 204-residue polypeptide: Large ribosomal subunit protein uL4 (204 aa).

The segment at 49-75 (TKGRSEVSGGGKKPWRQKGRGGARAGS) is disordered.

It belongs to the universal ribosomal protein uL4 family. As to quaternary structure, part of the 50S ribosomal subunit.

One of the primary rRNA binding proteins, this protein initially binds near the 5'-end of the 23S rRNA. It is important during the early stages of 50S assembly. It makes multiple contacts with different domains of the 23S rRNA in the assembled 50S subunit and ribosome. Functionally, forms part of the polypeptide exit tunnel. In Campylobacter hominis (strain ATCC BAA-381 / DSM 21671 / CCUG 45161 / LMG 19568 / NCTC 13146 / CH001A), this protein is Large ribosomal subunit protein uL4.